We begin with the raw amino-acid sequence, 178 residues long: ATP-dependent protease subunit HslV (178 aa).

T2 is an active-site residue. Na(+)-binding residues include S159, C162, and T165.

Belongs to the peptidase T1B family. HslV subfamily. A double ring-shaped homohexamer of HslV is capped on each side by a ring-shaped HslU homohexamer. The assembly of the HslU/HslV complex is dependent on binding of ATP.

It localises to the cytoplasm. It catalyses the reaction ATP-dependent cleavage of peptide bonds with broad specificity.. Allosterically activated by HslU binding. In terms of biological role, protease subunit of a proteasome-like degradation complex believed to be a general protein degrading machinery. The chain is ATP-dependent protease subunit HslV from Buchnera aphidicola subsp. Cinara cedri (strain Cc).